Reading from the N-terminus, the 158-residue chain is Transcription elongation factor GreA (158 aa).

The protein belongs to the GreA/GreB family.

Its function is as follows. Necessary for efficient RNA polymerase transcription elongation past template-encoded arresting sites. The arresting sites in DNA have the property of trapping a certain fraction of elongating RNA polymerases that pass through, resulting in locked ternary complexes. Cleavage of the nascent transcript by cleavage factors such as GreA or GreB allows the resumption of elongation from the new 3'terminus. GreA releases sequences of 2 to 3 nucleotides. This chain is Transcription elongation factor GreA, found in Salmonella typhi.